Here is a 609-residue protein sequence, read N- to C-terminus: Chaperone protein DnaK (609 aa).

T173 carries the phosphothreonine; by autocatalysis modification. The span at 525–542 shows a compositional bias: basic and acidic residues; that stretch reads ENISDEDKKNAEEKKDAL. Disordered stretches follow at residues 525 to 554 and 574 to 609; these read ENISDEDKKNAEEKKDALKTALEGEDIDDI and EQAQQAQQQGQEEQGSQDSTVEDADFKEVKDDEDKK. The span at 574-587 shows a compositional bias: low complexity; it reads EQAQQAQQQGQEEQ. The segment covering 597–609 has biased composition (basic and acidic residues); sequence ADFKEVKDDEDKK.

The protein belongs to the heat shock protein 70 family.

Acts as a chaperone. This is Chaperone protein DnaK from Staphylococcus epidermidis (strain ATCC 35984 / DSM 28319 / BCRC 17069 / CCUG 31568 / BM 3577 / RP62A).